A 236-amino-acid polypeptide reads, in one-letter code: Leucyl/phenylalanyl-tRNA--protein transferase (236 aa).

It belongs to the L/F-transferase family.

It localises to the cytoplasm. It catalyses the reaction N-terminal L-lysyl-[protein] + L-leucyl-tRNA(Leu) = N-terminal L-leucyl-L-lysyl-[protein] + tRNA(Leu) + H(+). The catalysed reaction is N-terminal L-arginyl-[protein] + L-leucyl-tRNA(Leu) = N-terminal L-leucyl-L-arginyl-[protein] + tRNA(Leu) + H(+). The enzyme catalyses L-phenylalanyl-tRNA(Phe) + an N-terminal L-alpha-aminoacyl-[protein] = an N-terminal L-phenylalanyl-L-alpha-aminoacyl-[protein] + tRNA(Phe). Functions in the N-end rule pathway of protein degradation where it conjugates Leu, Phe and, less efficiently, Met from aminoacyl-tRNAs to the N-termini of proteins containing an N-terminal arginine or lysine. This Shewanella sediminis (strain HAW-EB3) protein is Leucyl/phenylalanyl-tRNA--protein transferase.